Reading from the N-terminus, the 408-residue chain is L-lactate oxidase (408 aa).

Residues 14 to 370 (NEAIKMVNVD…KHADIRQINY (357 aa)) form the FMN hydroxy acid dehydrogenase domain. Tyr40 provides a ligand contact to pyruvate. FMN contacts are provided by residues 93-95 (PIA), Ser122, and Gln144. Tyr146 contacts pyruvate. Thr172 contacts FMN. Residue Arg181 participates in pyruvate binding. Residues Lys241 and Ser263 each coordinate FMN. Positions 265 and 268 each coordinate pyruvate. His265 (proton acceptor) is an active-site residue. Residues 296–300 (DSGVR) and Arg320 each bind FMN.

It belongs to the FMN-dependent alpha-hydroxy acid dehydrogenase family. In terms of assembly, homotetramer. It depends on FMN as a cofactor.

The catalysed reaction is a (2S)-2-hydroxycarboxylate + O2 = a 2-oxocarboxylate + H2O2. It carries out the reaction (S)-lactate + O2 = pyruvate + H2O2. The enzyme catalyses 2-hydroxyoctanoate + O2 = 2-oxooctanoate + H2O2. It catalyses the reaction glycolate + O2 = glyoxylate + H2O2. The catalysed reaction is mandelate + O2 = phenylglyoxylate + H2O2. It carries out the reaction 2-hydroxyoctadecanoate + O2 = 2-oxooctadecanoate + H2O2. In terms of biological role, oxidase that catalyzes the oxidation of a broad range of 2-hydroxyacids in vitro, such as (S)-lactate, 2-hydroxyoctanoate, and to a lesser extent glycolate, mandelate and 2-hydroxyoctadecanoate, to the corresponding 2-oxoacids, with a reduction of O2 to H2O2. May be involved in the utilization of L-lactate as an energy source for growth. In Lactobacillus jensenii, this protein is L-lactate oxidase.